A 134-amino-acid polypeptide reads, in one-letter code: UPF0102 protein Dvul_2148 (134 aa).

It belongs to the UPF0102 family.

The sequence is that of UPF0102 protein Dvul_2148 from Nitratidesulfovibrio vulgaris (strain DP4) (Desulfovibrio vulgaris).